Consider the following 101-residue polypeptide: Large ribosomal subunit protein eL21 (101 aa).

Basic residues predominate over residues 1–18 (MVKHSRGYRTRSRSLLRK). A disordered region spans residues 1–23 (MVKHSRGYRTRSRSLLRKSPRER).

Belongs to the eukaryotic ribosomal protein eL21 family.

The sequence is that of Large ribosomal subunit protein eL21 from Saccharolobus islandicus (strain Y.N.15.51 / Yellowstone #2) (Sulfolobus islandicus).